A 107-amino-acid polypeptide reads, in one-letter code: UPF0060 membrane protein ZMO1566 (107 aa).

4 helical membrane passes run 4–24 (LLYI…WAWI), 29–49 (SPLW…LLTF), 55–75 (AGKA…LWSW), and 84–104 (HWDL…LWMP).

The protein belongs to the UPF0060 family.

It localises to the cell inner membrane. This Zymomonas mobilis subsp. mobilis (strain ATCC 31821 / ZM4 / CP4) protein is UPF0060 membrane protein ZMO1566.